Reading from the N-terminus, the 562-residue chain is Arginine--tRNA ligase (562 aa).

The 'HIGH' region signature appears at alanine 129 to histidine 139.

The protein belongs to the class-I aminoacyl-tRNA synthetase family. In terms of assembly, monomer.

The protein resides in the cytoplasm. The enzyme catalyses tRNA(Arg) + L-arginine + ATP = L-arginyl-tRNA(Arg) + AMP + diphosphate. This Xylella fastidiosa (strain M23) protein is Arginine--tRNA ligase.